A 565-amino-acid polypeptide reads, in one-letter code: Oxygen-dependent choline dehydrogenase (565 aa).

7–36 is a binding site for FAD; it reads DYIICGAGSAGNVLATRLTEDPDVTVLLLE. H474 serves as the catalytic Proton acceptor.

The protein belongs to the GMC oxidoreductase family. It depends on FAD as a cofactor.

It carries out the reaction choline + A = betaine aldehyde + AH2. The catalysed reaction is betaine aldehyde + NAD(+) + H2O = glycine betaine + NADH + 2 H(+). It functions in the pathway amine and polyamine biosynthesis; betaine biosynthesis via choline pathway; betaine aldehyde from choline (cytochrome c reductase route): step 1/1. Involved in the biosynthesis of the osmoprotectant glycine betaine. Catalyzes the oxidation of choline to betaine aldehyde and betaine aldehyde to glycine betaine at the same rate. The protein is Oxygen-dependent choline dehydrogenase of Burkholderia thailandensis (strain ATCC 700388 / DSM 13276 / CCUG 48851 / CIP 106301 / E264).